The chain runs to 283 residues: Pantothenate synthetase (283 aa).

30-37 lines the ATP pocket; the sequence is MGNLHDGH. The active-site Proton donor is His37. Gln61 is a binding site for (R)-pantoate. Residue Gln61 coordinates beta-alanine. Position 149–152 (149–152) interacts with ATP; sequence GEKD. Gln155 lines the (R)-pantoate pocket. Position 186 to 189 (186 to 189) interacts with ATP; it reads LSSR.

It belongs to the pantothenate synthetase family. As to quaternary structure, homodimer.

The protein localises to the cytoplasm. It catalyses the reaction (R)-pantoate + beta-alanine + ATP = (R)-pantothenate + AMP + diphosphate + H(+). Its pathway is cofactor biosynthesis; (R)-pantothenate biosynthesis; (R)-pantothenate from (R)-pantoate and beta-alanine: step 1/1. In terms of biological role, catalyzes the condensation of pantoate with beta-alanine in an ATP-dependent reaction via a pantoyl-adenylate intermediate. The protein is Pantothenate synthetase of Escherichia fergusonii (strain ATCC 35469 / DSM 13698 / CCUG 18766 / IAM 14443 / JCM 21226 / LMG 7866 / NBRC 102419 / NCTC 12128 / CDC 0568-73).